Here is a 211-residue protein sequence, read N- to C-terminus: High mobility group protein B1-like 1 (211 aa).

An N6-acetyllysine mark is found at Lys-3, Lys-7, Lys-8, Lys-12, Lys-28, Lys-29, and Lys-30. Positions 9 to 79 (PRGKMSSYAF…HYERQMKTYI (71 aa)) form a DNA-binding region, HMG box 1. The disordered stretch occupies residues 71–96 (YERQMKTYIPPKGETKKKFKDPNAPK). A compositionally biased stretch (basic and acidic residues) spans 83 to 94 (GETKKKFKDPNA). The HMG box 2 DNA-binding region spans 95–163 (PKRPPSAFFL…KYEKDIAAYQ (69 aa)). 10 positions are modified to N6-acetyllysine: Lys-127, Lys-128, Lys-172, Lys-173, Lys-177, Lys-180, Lys-182, Lys-183, Lys-184, and Lys-185. The tract at residues 161-211 (AYQAKGKPEAAKKGVVKAEKSKKKKEEEEDEEDEEDEEEEDEEDEEDDDDE) is disordered. Positions 166–179 (GKPEAAKKGVVKAE) are enriched in basic and acidic residues. A compositionally biased stretch (acidic residues) spans 187 to 211 (EEEDEEDEEDEEEEDEEDEEDDDDE).

It belongs to the HMGB family.

The protein localises to the nucleus. Its subcellular location is the chromosome. Its function is as follows. Binds preferentially single-stranded DNA and unwinds double-stranded DNA. The chain is High mobility group protein B1-like 1 (HMGB1P1) from Homo sapiens (Human).